We begin with the raw amino-acid sequence, 108 residues long: DNA-binding protein HBbu (108 aa).

It belongs to the bacterial histone-like protein family.

In terms of biological role, histone-like DNA-binding protein which is capable of wrapping DNA to stabilize it, and thus to prevent its denaturation under extreme environmental conditions. This is DNA-binding protein HBbu (hbb) from Borreliella japonica (Borrelia japonica).